Consider the following 61-residue polypeptide: Small ribosomal subunit protein uS14 (61 aa).

Residues cysteine 24, cysteine 27, cysteine 40, and cysteine 43 each coordinate Zn(2+).

It belongs to the universal ribosomal protein uS14 family. Zinc-binding uS14 subfamily. In terms of assembly, part of the 30S ribosomal subunit. Contacts proteins S3 and S10. The cofactor is Zn(2+).

Functionally, binds 16S rRNA, required for the assembly of 30S particles and may also be responsible for determining the conformation of the 16S rRNA at the A site. This Geobacillus stearothermophilus (Bacillus stearothermophilus) protein is Small ribosomal subunit protein uS14.